The chain runs to 224 residues: Ribose-5-phosphate isomerase A (224 aa).

Residues 26 to 29, 81 to 84, and 94 to 97 each bind substrate; these read TGST, DGAD, and KGGG. E103 acts as the Proton acceptor in catalysis. Residue K121 coordinates substrate.

This sequence belongs to the ribose 5-phosphate isomerase family. As to quaternary structure, homodimer.

It catalyses the reaction aldehydo-D-ribose 5-phosphate = D-ribulose 5-phosphate. The protein operates within carbohydrate degradation; pentose phosphate pathway; D-ribose 5-phosphate from D-ribulose 5-phosphate (non-oxidative stage): step 1/1. In terms of biological role, catalyzes the reversible conversion of ribose-5-phosphate to ribulose 5-phosphate. The sequence is that of Ribose-5-phosphate isomerase A from Listeria innocua serovar 6a (strain ATCC BAA-680 / CLIP 11262).